A 473-amino-acid chain; its full sequence is Cysteine--tRNA ligase (473 aa).

Cysteine 33 is a Zn(2+) binding site. The short motif at 35-45 (ATVQGQPHIGH) is the 'HIGH' region element. 3 residues coordinate Zn(2+): cysteine 211, histidine 236, and glutamate 240. The 'KMSKS' region signature appears at 267–271 (KMSKS). An ATP-binding site is contributed by lysine 270.

It belongs to the class-I aminoacyl-tRNA synthetase family. In terms of assembly, monomer. Requires Zn(2+) as cofactor.

It localises to the cytoplasm. It catalyses the reaction tRNA(Cys) + L-cysteine + ATP = L-cysteinyl-tRNA(Cys) + AMP + diphosphate. The protein is Cysteine--tRNA ligase of Mycobacterium leprae (strain Br4923).